The chain runs to 392 residues: Galactokinase (392 aa).

Position 37 to 40 (37 to 40) interacts with substrate; it reads EHTD. ATP is bound by residues Ser71 and 128-134; that span reads GAGLSSS. Ser134 and Glu166 together coordinate Mg(2+). Asp178 functions as the Proton acceptor in the catalytic mechanism. Tyr228 provides a ligand contact to substrate.

Belongs to the GHMP kinase family. GalK subfamily.

The protein localises to the cytoplasm. It carries out the reaction alpha-D-galactose + ATP = alpha-D-galactose 1-phosphate + ADP + H(+). It participates in carbohydrate metabolism; galactose metabolism. Catalyzes the transfer of the gamma-phosphate of ATP to D-galactose to form alpha-D-galactose-1-phosphate (Gal-1-P). The sequence is that of Galactokinase from Streptococcus pneumoniae serotype 4 (strain ATCC BAA-334 / TIGR4).